The following is a 155-amino-acid chain: Interleukin-2 (155 aa).

An N-terminal signal peptide occupies residues 1–20; the sequence is MYKIQLLSCIALTLALVANG. Threonine 23 is a glycosylation site (O-linked (GalNAc...) threonine). Residues cysteine 79 and cysteine 127 are joined by a disulfide bond.

Belongs to the IL-2 family.

It localises to the secreted. Its function is as follows. Cytokine produced by activated CD4-positive helper T-cells and to a lesser extend activated CD8-positive T-cells and natural killer (NK) cells that plays pivotal roles in the immune response and tolerance. Binds to a receptor complex composed of either the high-affinity trimeric IL-2R (IL2RA/CD25, IL2RB/CD122 and IL2RG/CD132) or the low-affinity dimeric IL-2R (IL2RB and IL2RG). Interaction with the receptor leads to oligomerization and conformation changes in the IL-2R subunits resulting in downstream signaling starting with phosphorylation of JAK1 and JAK3. In turn, JAK1 and JAK3 phosphorylate the receptor to form a docking site leading to the phosphorylation of several substrates including STAT5. This process leads to activation of several pathways including STAT, phosphoinositide-3-kinase/PI3K and mitogen-activated protein kinase/MAPK pathways. Functions as a T-cell growth factor and can increase NK-cell cytolytic activity as well. Promotes strong proliferation of activated B-cells and subsequently immunoglobulin production. Plays a pivotal role in regulating the adaptive immune system by controlling the survival and proliferation of regulatory T-cells, which are required for the maintenance of immune tolerance. Moreover, participates in the differentiation and homeostasis of effector T-cell subsets, including Th1, Th2, Th17 as well as memory CD8-positive T-cells. This is Interleukin-2 (IL2) from Bubalus bubalis (Domestic water buffalo).